A 203-amino-acid polypeptide reads, in one-letter code: Holliday junction branch migration complex subunit RuvA (203 aa).

Residues 1–63 (MIGQLSGKVD…EEHIHLYGFL (63 aa)) are domain I. A domain II region spans residues 64 to 142 (TLEEKIFFNL…KISSGSAIIK (79 aa)). The flexible linker stretch occupies residues 143 to 149 (ESLNIKN). The segment at 150-203 (ITPVASNEVIKALVNLGFSRFEAQNAVQGIITQNPEISIDELIKTALKNRNSNF) is domain III.

Belongs to the RuvA family. As to quaternary structure, homotetramer. Forms an RuvA(8)-RuvB(12)-Holliday junction (HJ) complex. HJ DNA is sandwiched between 2 RuvA tetramers; dsDNA enters through RuvA and exits via RuvB. An RuvB hexamer assembles on each DNA strand where it exits the tetramer. Each RuvB hexamer is contacted by two RuvA subunits (via domain III) on 2 adjacent RuvB subunits; this complex drives branch migration. In the full resolvosome a probable DNA-RuvA(4)-RuvB(12)-RuvC(2) complex forms which resolves the HJ.

It localises to the cytoplasm. Functionally, the RuvA-RuvB-RuvC complex processes Holliday junction (HJ) DNA during genetic recombination and DNA repair, while the RuvA-RuvB complex plays an important role in the rescue of blocked DNA replication forks via replication fork reversal (RFR). RuvA specifically binds to HJ cruciform DNA, conferring on it an open structure. The RuvB hexamer acts as an ATP-dependent pump, pulling dsDNA into and through the RuvAB complex. HJ branch migration allows RuvC to scan DNA until it finds its consensus sequence, where it cleaves and resolves the cruciform DNA. In Rickettsia conorii (strain ATCC VR-613 / Malish 7), this protein is Holliday junction branch migration complex subunit RuvA.